A 571-amino-acid polypeptide reads, in one-letter code: Urease subunit alpha (571 aa).

The Urease domain occupies 133 to 571; it reads GGIDTHVHFI…LPLAQRYFLF (439 aa). 3 residues coordinate Ni(2+): histidine 138, histidine 140, and lysine 221. Lysine 221 carries the post-translational modification N6-carboxylysine. Histidine 223 is a substrate binding site. Positions 250 and 276 each coordinate Ni(2+). Catalysis depends on histidine 324, which acts as the Proton donor. Position 364 (aspartate 364) interacts with Ni(2+).

Belongs to the metallo-dependent hydrolases superfamily. Urease alpha subunit family. In terms of assembly, heterotrimer of UreA (gamma), UreB (beta) and UreC (alpha) subunits. Three heterotrimers associate to form the active enzyme. It depends on Ni cation as a cofactor. In terms of processing, carboxylation allows a single lysine to coordinate two nickel ions.

The protein localises to the cytoplasm. The enzyme catalyses urea + 2 H2O + H(+) = hydrogencarbonate + 2 NH4(+). The protein operates within nitrogen metabolism; urea degradation; CO(2) and NH(3) from urea (urease route): step 1/1. The protein is Urease subunit alpha of Staphylococcus carnosus (strain TM300).